A 66-amino-acid polypeptide reads, in one-letter code: Large ribosomal subunit protein bL33c (66 aa).

It belongs to the bacterial ribosomal protein bL33 family.

The protein resides in the plastid. The protein localises to the chloroplast. This Platanus occidentalis (Sycamore) protein is Large ribosomal subunit protein bL33c.